The following is a 283-amino-acid chain: ATP synthase gamma chain (283 aa).

The protein belongs to the ATPase gamma chain family. In terms of assembly, F-type ATPases have 2 components, CF(1) - the catalytic core - and CF(0) - the membrane proton channel. CF(1) has five subunits: alpha(3), beta(3), gamma(1), delta(1), epsilon(1). CF(0) has three main subunits: a, b and c.

The protein resides in the cell membrane. Produces ATP from ADP in the presence of a proton gradient across the membrane. The gamma chain is believed to be important in regulating ATPase activity and the flow of protons through the CF(0) complex. The protein is ATP synthase gamma chain of Clostridium kluyveri (strain NBRC 12016).